Reading from the N-terminus, the 287-residue chain is HTH-type transcriptional regulator MurR (287 aa).

One can recognise an HTH rpiR-type domain in the interval 1-77 (MLYLAKMRNA…MALIEEYSVN (77 aa)). The segment at residues 37-56 (SRNLAKQLEVSQSSIVKFAQ) is a DNA-binding region (H-T-H motif). Residues 128-268 (VINLISKARL…FVGMVQLNDV (141 aa)) enclose the SIS domain.

Homotetramer.

It participates in amino-sugar metabolism; N-acetylmuramate degradation [regulation]. Functionally, represses the expression of the murPQ operon involved in the uptake and degradation of N-acetylmuramic acid (MurNAc). Binds to two adjacent inverted repeats within the operator region. MurNAc 6-phosphate, the substrate of MurQ, is the specific inducer that weakens binding of MurR to the operator. This chain is HTH-type transcriptional regulator MurR, found in Citrobacter koseri (strain ATCC BAA-895 / CDC 4225-83 / SGSC4696).